A 335-amino-acid polypeptide reads, in one-letter code: Spike protein P1 (335 aa).

In terms of assembly, monomer.

It localises to the virion. In terms of biological role, receptor binding protein located at the fivefold vertices. The chain is Spike protein P1 (I) from Pseudoalteromonas espejiana (Bacteriophage PM2).